Reading from the N-terminus, the 447-residue chain is Serine/threonine-protein phosphatase 2A 55 kDa regulatory subunit B delta isoform (447 aa).

WD repeat units follow at residues 26 to 65, 91 to 132, 175 to 213, 224 to 264, 283 to 321, 338 to 379, and 414 to 447; these read AEADIISTVEFNCSGELLATGDKGGRVVIFQREQENKSRP, EIEE…KRVE, AHTYHINSISVNSDHQTYLSADDLRVNLWHLEITDRSFN, ELTE…LCDR, EIISSISDVKFSHSGRYMMTRDYLSVKVWDLNMESRPVE, ENDC…DITL, and DFNKKILHTAWHPTDNIIAVAATNNLYIFQDKVN.

The protein belongs to the phosphatase 2A regulatory subunit B family. As to quaternary structure, PP2A consists of a common heterodimeric core enzyme, composed of a 36 kDa catalytic subunit (subunit C) and a 65 kDa constant regulatory subunit (PR65 or subunit A), that associates with a variety of regulatory subunits. Proteins that associate with the core dimer include three families of regulatory subunits B (the R2/B/PR55/B55, R3/B''/PR72/PR130/PR59 and R5/B'/B56 families), the 48 kDa variable regulatory subunit, viral proteins, and cell signaling molecules. Interacts with ensa (when phosphorylated at 'Ser-67') and arpp19 (when phosphorylated at 'Ser-67'), leading to inhibit PP2A activity.

It localises to the cytoplasm. Its function is as follows. Substrate-recognition subunit of protein phosphatase 2A (PP2A) that plays a key role in cell cycle by controlling mitosis entry and exit. The activity of PP2A complexes containing ppp2r2d (PR55-delta) fluctuate during the cell cycle: the activity is high in interphase and low in mitosis. During mitosis, activity of PP2A is inhibited via interaction with phosphorylated ensa and arpp19 inhibitors. PP2A complexes containing ppp2r2d (PR55-delta) also regulate the activity of TGF-beta/Activin/Nodal signaling by restricting receptor activity. Within the PP2A complexes, the B regulatory subunits modulate substrate selectivity and catalytic activity, and may also direct the localization of the catalytic enzyme to a particular subcellular compartment. This is Serine/threonine-protein phosphatase 2A 55 kDa regulatory subunit B delta isoform (ppp2r2d) from Xenopus laevis (African clawed frog).